The following is a 169-amino-acid chain: Der GTPase-activating protein YihI (169 aa).

Disordered stretches follow at residues 1–83 (MNPL…PTKP) and 150–169 (DEEE…LKGN). Basic and acidic residues predominate over residues 21-30 (NREELNAEGR). Positions 31–40 (ARKREKKHRG) are enriched in basic residues. Basic and acidic residues-rich tracts occupy residues 51 to 66 (SGDK…DPRL) and 150 to 161 (DEEEREEEKQDD).

Belongs to the YihI family. As to quaternary structure, interacts with Der.

Functionally, a GTPase-activating protein (GAP) that modifies Der/EngA GTPase function. May play a role in ribosome biogenesis. The protein is Der GTPase-activating protein YihI of Photorhabdus laumondii subsp. laumondii (strain DSM 15139 / CIP 105565 / TT01) (Photorhabdus luminescens subsp. laumondii).